Consider the following 381-residue polypeptide: Protein kinase gsk31 (381 aa).

In terms of domain architecture, Protein kinase spans 25–309 (YEPCRVLGSG…AIEVLTHPFF (285 aa)). Residues 31–39 (LGSGSFGVV) and K54 contribute to the ATP site. Catalysis depends on D150, which acts as the Proton acceptor. Residue S184 is modified to Phosphoserine. Phosphotyrosine is present on Y185.

It belongs to the protein kinase superfamily. CMGC Ser/Thr protein kinase family. GSK-3 subfamily.

It carries out the reaction L-seryl-[protein] + ATP = O-phospho-L-seryl-[protein] + ADP + H(+). The catalysed reaction is L-threonyl-[protein] + ATP = O-phospho-L-threonyl-[protein] + ADP + H(+). This Schizosaccharomyces pombe (strain 972 / ATCC 24843) (Fission yeast) protein is Protein kinase gsk31 (gsk31).